The following is a 429-amino-acid chain: 3-phosphoshikimate 1-carboxyvinyltransferase (429 aa).

Lys23, Ser24, and Arg28 together coordinate 3-phosphoshikimate. Lys23 contacts phosphoenolpyruvate. The phosphoenolpyruvate site is built by Gly97 and Arg125. 3-phosphoshikimate contacts are provided by Ser170, Ser171, Gln172, Ser198, Asp314, Asn338, and Lys342. Gln172 contacts phosphoenolpyruvate. Asp314 acts as the Proton acceptor in catalysis. 3 residues coordinate phosphoenolpyruvate: Arg346, Arg388, and Lys413.

Belongs to the EPSP synthase family. Monomer.

It is found in the cytoplasm. The catalysed reaction is 3-phosphoshikimate + phosphoenolpyruvate = 5-O-(1-carboxyvinyl)-3-phosphoshikimate + phosphate. The protein operates within metabolic intermediate biosynthesis; chorismate biosynthesis; chorismate from D-erythrose 4-phosphate and phosphoenolpyruvate: step 6/7. Functionally, catalyzes the transfer of the enolpyruvyl moiety of phosphoenolpyruvate (PEP) to the 5-hydroxyl of shikimate-3-phosphate (S3P) to produce enolpyruvyl shikimate-3-phosphate and inorganic phosphate. The sequence is that of 3-phosphoshikimate 1-carboxyvinyltransferase from Pectobacterium atrosepticum (strain SCRI 1043 / ATCC BAA-672) (Erwinia carotovora subsp. atroseptica).